The following is a 392-amino-acid chain: Galactokinase (392 aa).

40-43 (EHID) serves as a coordination point for substrate. Residues S74 and 128–134 (GSGLSSS) each bind ATP. The Mg(2+) site is built by S134 and E167. The active-site Proton acceptor is the D179. A substrate-binding site is contributed by Y229.

This sequence belongs to the GHMP kinase family. GalK subfamily.

Its subcellular location is the cytoplasm. The enzyme catalyses alpha-D-galactose + ATP = alpha-D-galactose 1-phosphate + ADP + H(+). The protein operates within carbohydrate metabolism; galactose metabolism. In terms of biological role, catalyzes the transfer of the gamma-phosphate of ATP to D-galactose to form alpha-D-galactose-1-phosphate (Gal-1-P). The chain is Galactokinase from Clostridium tetani (strain Massachusetts / E88).